The primary structure comprises 357 residues: O-methyltransferase pgmB (357 aa).

D206 provides a ligand contact to S-adenosyl-L-methionine. H256 serves as the catalytic Proton acceptor.

Belongs to the class I-like SAM-binding methyltransferase superfamily. Cation-independent O-methyltransferase family.

It functions in the pathway pigment biosynthesis. The protein operates within secondary metabolite biosynthesis. Functionally, O-methyltransferase; part of the gene cluster that mediates the biosynthesis of pleosporalin A, ascomycone A, as well as a third cryptic naphthoquinone derived pigment, all responsible for the coloration of conidia. Specifically methylates position C-6 of the pgmA product 3-acetonyl-1,6,8-trihydroxy-2-naphthaldehyde to yield fusarubinaldehyde. The pathway begins with the biosynthesis of the cyclized heptaketide 3-acetonyl-1,6,8-trihydroxy-2-naphthaldehyde by the NR-PKS pgmA. The C-6 hydroxyl group is further methylated by the O-methyltransferase pgmB to yield fusarubinaldehyde which is in turn oxidized by the cytochrome P450 monooxygenase pgmC at C-9. The C-1 hydroxyl group is then methylated spontaneously. Although pgmE, pgmD and pgmH are essential for the production of pleosporalin A, it is not the case for the 2 other final products and it remains difficult to assign a specific function to each enzyme. PgmF and pgmG seem not to be involved in pigment biosynthesis although they were regulated by the cluster-specific transcription factor pgmR. The sequence is that of O-methyltransferase pgmB from Aspergillus terreus (strain NIH 2624 / FGSC A1156).